Consider the following 263-residue polypeptide: N-glycosylase/DNA lyase (263 aa).

Residues glutamine 43, serine 71, and tryptophan 82 each coordinate 8-oxoguanine. A helix-hairpin-helix region spans residues 139–204 (RRYYFENMMG…EDVRIKAYTE (66 aa)). The active-site Schiff-base intermediate with DNA is the lysine 164. The 8-oxoguanine site is built by phenylalanine 168 and proline 194. The active site involves aspartate 196. 2 residues coordinate 8-oxoguanine: aspartate 230 and tryptophan 234.

Belongs to the archaeal N-glycosylase/DNA lyase (AGOG) family.

It catalyses the reaction 2'-deoxyribonucleotide-(2'-deoxyribose 5'-phosphate)-2'-deoxyribonucleotide-DNA = a 3'-end 2'-deoxyribonucleotide-(2,3-dehydro-2,3-deoxyribose 5'-phosphate)-DNA + a 5'-end 5'-phospho-2'-deoxyribonucleoside-DNA + H(+). Functionally, DNA repair enzyme that is part of the base excision repair (BER) pathway; protects from oxidative damage by removing the major product of DNA oxidation, 8-oxoguanine (GO), from single- and double-stranded DNA substrates. This is N-glycosylase/DNA lyase from Thermococcus kodakarensis (strain ATCC BAA-918 / JCM 12380 / KOD1) (Pyrococcus kodakaraensis (strain KOD1)).